We begin with the raw amino-acid sequence, 219 residues long: MNSSTRYLSLLSALVVLVKGNPVPSALAELMTSGWTSGEELGTDGETGAPPKWEKMIKMLVHEVTTLRNQQFVEEFQKPVEEISSFSQHQVPSTPPHLSKTLCSASNKEACLQEISRGLQVYQLLLQHVKAEYPQSTLLPSVTHQTTVLIGLVKDQMKVAEVVEDLSASERKRVLGEVSTGTEWERKTSVHAILRELRNFLVDTKRALRRMGKRGKDFQ.

A signal peptide spans 1 to 20 (MNSSTRYLSLLSALVVLVKG). Cys103 and Cys111 are disulfide-bonded.

This sequence belongs to the IL-6 superfamily. In terms of assembly, component of a hexamer of two molecules each of IL6, IL6R and IL6ST; first binds to IL6R to associate with the signaling subunit IL6ST. In terms of tissue distribution, expressed in spleen, gill and gastrointestinal tract, ovary and brain. Highest expression in ovary.

It localises to the secreted. Its function is as follows. Cytokine with a wide variety of biological functions in immunity, tissue regeneration, and metabolism. Binds to IL6R, then the complex associates to the signaling subunit IL6ST/gp130 to trigger the intracellular IL6-signaling pathway. The interaction with the membrane-bound IL6R and IL6ST stimulates 'classic signaling', whereas the binding of IL6 and soluble IL6R to IL6ST stimulates 'trans-signaling'. Alternatively, 'cluster signaling' occurs when membrane-bound IL6:IL6R complexes on transmitter cells activate IL6ST receptors on neighboring receiver cells. This chain is Interleukin-6 (il6), found in Oncorhynchus mykiss (Rainbow trout).